The sequence spans 137 residues: Probable DNA-directed RNA polymerases I, II, and III subunit RPABC2 (137 aa).

Composition is skewed to acidic residues over residues 1 to 27 (MADEDDYQDMDNDDFVDDNEMEDVIEE) and 34 to 43 (NEDEDDDNVD). The segment at 1–43 (MADEDDYQDMDNDDFVDDNEMEDVIEEDPQRPDNEDEDDDNVD) is disordered.

The protein belongs to the archaeal Rpo6/eukaryotic RPB6 RNA polymerase subunit family. In terms of assembly, component of the RNA polymerase I (Pol I), RNA polymerase II (Pol II) and RNA polymerase III (Pol III) complexes consisting of at least 13, 12 and 17 subunits, respectively.

It is found in the nucleus. Functionally, DNA-dependent RNA polymerases catalyze the transcription of DNA into RNA using the four ribonucleoside triphosphates as substrates. Common component of RNA polymerases I, II and III which synthesize ribosomal RNA precursors, mRNA precursors and many functional non-coding RNAs, and small RNAs, such as 5S rRNA and tRNAs, respectively. Pol II is the central component of the basal RNA polymerase II transcription machinery. Pols are composed of mobile elements that move relative to each other. In Pol II, RPB6 is part of the clamp element and together with parts of RPB1 and RPB2 forms a pocket to which the RPB4-RPB7 subcomplex binds. The polypeptide is Probable DNA-directed RNA polymerases I, II, and III subunit RPABC2 (rpb-6) (Caenorhabditis elegans).